The chain runs to 120 residues: Ragulator complex protein LAMTOR4 homolog (120 aa).

Residues 93–120 form a disordered region; it reads QNGVTTTTSSSSSNSVYNDASDSGAVLA. Residues 97-107 are compositionally biased toward low complexity; it reads TTTTSSSSSNS.

The protein belongs to the LAMTOR4 family. Part of the Ragulator complex composed of Lamtor3, Lamtor2, CG14184, CG14812, and Lamtor4.

The protein localises to the lysosome. Regulator of the TOR pathway, a signaling cascade that promotes cell growth in response to growth factors, energy levels, and amino acids. As part of the Ragulator complex, may activate the TOR signaling cascade in response to amino acids. In Drosophila melanogaster (Fruit fly), this protein is Ragulator complex protein LAMTOR4 homolog.